The primary structure comprises 422 residues: Testin (422 aa).

In terms of domain architecture, PET spans 92–199; it reads MILTSPVAAK…GDVKLPKEVE (108 aa). Residues 135–165 are disordered; it reads QPVAGSEGAQYRKKQLAKQLPAHDQDPSKCH. Positions 155–165 are enriched in basic and acidic residues; the sequence is PAHDQDPSKCH. 3 consecutive LIM zinc-binding domains span residues 234-299, 300-359, and 360-422; these read YYCF…SEKP, RCAG…NHAV, and SCQG…KMSS.

The protein belongs to the prickle / espinas / testin family.

It is found in the cytoplasm. It localises to the cell cortex. The protein resides in the cell junction. The protein localises to the focal adhesion. Its function is as follows. Scaffold protein that may play a role in cell adhesion, cell spreading and in the reorganization of the actin cytoskeleton. May inhibit cell growth. Regulates cranial neural crest migration. Acts together with prickle1 to control axial elongation. The sequence is that of Testin from Xenopus tropicalis (Western clawed frog).